The chain runs to 406 residues: MAEKTEKPTAKKLRDAAKKGQTFKARDIVALIVIATGALAAPALVDLTRIAAEFVRIASTGAQPNPGAYAFAWAKLFLRIAAPFVLLCAAAGALPSLVQSRFTLAVESIRFDLTALDPVKGMKRLFSWRSAKDAVKALLYVGVFALTVRVFAGLYHADVFGLFRARPALLGHMWIVLTVRLVLLFLLCALPVLILDAAVEYFLYHRELKMDKHEVKQEYKESEGNHEIKSKRREIHQELLSEEIKANVEQSDFIVANPTHIAIGVYVNPDIVPIPFVSVRETNARALAVIRHAEACGVPVVRNVALARSIYRNSPRRYSFVSHDDIDGVMRVLIWLGEVEAANRGGPPPETRAPTSAEPQARDGVAPPGDACADNAFPDDAPPGAAAPNAGSPDGGAPARTGDQNA.

Transmembrane regions (helical) follow at residues 28–48 (IVAL…VDLT), 80–100 (IAAP…LVQS), 137–157 (ALLY…LYHA), and 175–195 (IVLT…VLIL). The segment at 341–406 (AANRGGPPPE…APARTGDQNA (66 aa)) is disordered. Over residues 370–399 (DACADNAFPDDAPPGAAAPNAGSPDGGAPA) the composition is skewed to low complexity.

This sequence belongs to the type III secretion exporter family.

It localises to the cell membrane. Functionally, part of the bsa type III secretion system, is involved in the intracellular replication of invading bacteria inside the host cell. Probably necessary for the lysis of the vacuole membrane and escape into the host cell cytoplasm. The chain is Secretion apparatus protein BsaZ (bsaZ) from Burkholderia pseudomallei (strain 668).